Reading from the N-terminus, the 299-residue chain is Putative beta-glucosidase 2 (299 aa).

Positions 1–16 are cleaved as a signal peptide; it reads MLHCITTIFLSISRMT. 49 to 50 contributes to the a beta-D-glucoside binding site; that stretch reads NE. E50 (proton donor) is an active-site residue. Cysteines 69 and 72 form a disulfide. N-linked (GlcNAc...) asparagine glycans are attached at residues N71 and N76. Y189 contributes to the a beta-D-glucoside binding site. An N-linked (GlcNAc...) asparagine glycan is attached at N222. E255 contributes to the a beta-D-glucoside binding site. E255 serves as the catalytic Nucleophile. N-linked (GlcNAc...) asparagine glycosylation occurs at N290.

It belongs to the glycosyl hydrolase 1 family.

It carries out the reaction Hydrolysis of terminal, non-reducing beta-D-glucosyl residues with release of beta-D-glucose.. The chain is Putative beta-glucosidase 2 from Arabidopsis thaliana (Mouse-ear cress).